We begin with the raw amino-acid sequence, 277 residues long: Adenylate kinase (277 aa).

Gly53–Thr58 serves as a coordination point for ATP. Residues Ala73–Val102 form an NMP region. AMP is bound by residues Thr74, Arg79, Gly100–Val102, Gly129–Arg132, and Gln136. An LID region spans residues Gly170 to Asp207. ATP-binding positions include Arg171 and Ser180–Tyr181. 2 residues coordinate AMP: Arg204 and Arg215. Gln243 is a binding site for ATP.

This sequence belongs to the adenylate kinase family. AK2 subfamily. In terms of assembly, monomer.

The protein localises to the cytoplasm. The protein resides in the cytosol. It localises to the mitochondrion intermembrane space. It carries out the reaction AMP + ATP = 2 ADP. In terms of biological role, catalyzes the reversible transfer of the terminal phosphate group between ATP and AMP. Plays an important role in cellular energy homeostasis and in adenine nucleotide metabolism. Adenylate kinase activity is critical for regulation of the phosphate utilization and the AMP de novo biosynthesis pathways. The chain is Adenylate kinase from Phaeosphaeria nodorum (strain SN15 / ATCC MYA-4574 / FGSC 10173) (Glume blotch fungus).